The sequence spans 595 residues: Wee1-like protein kinase 1-B (595 aa).

Residues 1–17 (MNVQPRNMNVQPRNMNV) show a composition bias toward polar residues. The disordered stretch occupies residues 1-127 (MNVQPRNMNV…CPGTPPHKTF (127 aa)). Positions 111 to 122 (PTSPIPECPGTP) are enriched in pro residues. Position 186 is a phosphothreonine; by cdk1 (Thr186). The 271-residue stretch at 248–518 (FHELEKIGSG…SVALVKHSVL (271 aa)) folds into the Protein kinase domain. ATP contacts are provided by residues 254 to 262 (IGSGEFGSV) and Lys277. The Proton acceptor role is filled by Asp375. Mg(2+) is bound by residues Asn380 and Asp412. The stretch at 526–563 (AEQLRIELDAEKFKNALLQKELKKAQIAKAAAEERAHF) forms a coiled coil.

The protein belongs to the protein kinase superfamily. Ser/Thr protein kinase family. WEE1 subfamily. Interacts (when phosphorylated at Thr-186) with pin1. In terms of processing, phosphorylation at Thr-186 during M-phase by cdk1 inhibits the kinase activity and leads to interaction with pin1. As to expression, zygotically expressed. Present in oocytes and postgastrula embryos (at least until the tailbud stage). Expression begins at the midblastula stage and increases after the early gastrula stage.

It is found in the nucleus. It carries out the reaction L-tyrosyl-[protein] + ATP = O-phospho-L-tyrosyl-[protein] + ADP + H(+). Acts as a zygotic negative regulator of entry into mitosis (G2 to M transition) by protecting the nucleus from cytoplasmically activated cyclin B1-complexed cdk1 before the onset of mitosis by mediating phosphorylation of cdk1 on 'Tyr-15'. Specifically phosphorylates and inactivates cyclin B1-complexed cdk1 reaching a maximum during G2 phase and a minimum as cells enter M phase. Phosphorylation of cyclin B1-cdk1 occurs exclusively on 'Tyr-15' and phosphorylation of monomeric cdk1 does not occur. The polypeptide is Wee1-like protein kinase 1-B (wee1-b) (Xenopus laevis (African clawed frog)).